Consider the following 783-residue polypeptide: Lon protease (783 aa).

One can recognise a Lon N-terminal domain in the interval 16 to 210; it reads LPLLASRGVV…KLLEIIKDEI (195 aa). 361 to 368 provides a ligand contact to ATP; the sequence is GAPGVGKT. The 182-residue stretch at 597 to 778 folds into the Lon proteolytic domain; that stretch reads KDRVGVATGM…DQVLDLILGG (182 aa). Catalysis depends on residues Ser684 and Lys727.

It belongs to the peptidase S16 family. Homohexamer. Organized in a ring with a central cavity.

The protein localises to the cytoplasm. The catalysed reaction is Hydrolysis of proteins in presence of ATP.. Functionally, ATP-dependent serine protease that mediates the selective degradation of mutant and abnormal proteins as well as certain short-lived regulatory proteins. Required for cellular homeostasis and for survival from DNA damage and developmental changes induced by stress. Degrades polypeptides processively to yield small peptide fragments that are 5 to 10 amino acids long. Binds to DNA in a double-stranded, site-specific manner. This Halothermothrix orenii (strain H 168 / OCM 544 / DSM 9562) protein is Lon protease.